Consider the following 358-residue polypeptide: UDP-N-acetylglucosamine--N-acetylmuramyl-(pentapeptide) pyrophosphoryl-undecaprenol N-acetylglucosamine transferase (358 aa).

3 residues coordinate UDP-N-acetyl-alpha-D-glucosamine: Arg166, Ser196, and Gln291.

The protein belongs to the glycosyltransferase 28 family. MurG subfamily.

Its subcellular location is the cell membrane. It catalyses the reaction Mur2Ac(oyl-L-Ala-gamma-D-Glu-L-Lys-D-Ala-D-Ala)-di-trans,octa-cis-undecaprenyl diphosphate + UDP-N-acetyl-alpha-D-glucosamine = beta-D-GlcNAc-(1-&gt;4)-Mur2Ac(oyl-L-Ala-gamma-D-Glu-L-Lys-D-Ala-D-Ala)-di-trans,octa-cis-undecaprenyl diphosphate + UDP + H(+). The protein operates within cell wall biogenesis; peptidoglycan biosynthesis. Its function is as follows. Cell wall formation. Catalyzes the transfer of a GlcNAc subunit on undecaprenyl-pyrophosphoryl-MurNAc-pentapeptide (lipid intermediate I) to form undecaprenyl-pyrophosphoryl-MurNAc-(pentapeptide)GlcNAc (lipid intermediate II). In Staphylococcus saprophyticus subsp. saprophyticus (strain ATCC 15305 / DSM 20229 / NCIMB 8711 / NCTC 7292 / S-41), this protein is UDP-N-acetylglucosamine--N-acetylmuramyl-(pentapeptide) pyrophosphoryl-undecaprenol N-acetylglucosamine transferase.